The following is a 470-amino-acid chain: ATP synthase subunit beta (470 aa).

155–162 is a binding site for ATP; it reads GGAGVGKT.

It belongs to the ATPase alpha/beta chains family. F-type ATPases have 2 components, CF(1) - the catalytic core - and CF(0) - the membrane proton channel. CF(1) has five subunits: alpha(3), beta(3), gamma(1), delta(1), epsilon(1). CF(0) has three main subunits: a(1), b(2) and c(9-12). The alpha and beta chains form an alternating ring which encloses part of the gamma chain. CF(1) is attached to CF(0) by a central stalk formed by the gamma and epsilon chains, while a peripheral stalk is formed by the delta and b chains.

The protein resides in the cell membrane. It carries out the reaction ATP + H2O + 4 H(+)(in) = ADP + phosphate + 5 H(+)(out). Produces ATP from ADP in the presence of a proton gradient across the membrane. The catalytic sites are hosted primarily by the beta subunits. The protein is ATP synthase subunit beta of Staphylococcus haemolyticus (strain JCSC1435).